The sequence spans 393 residues: Chorismate synthase (393 aa).

R40 and R46 together coordinate NADP(+). Residues 129–131, 249–250, G301, 316–320, and R342 contribute to the FMN site; these read RSS, QA, and KPIPT.

The protein belongs to the chorismate synthase family. As to quaternary structure, homotetramer. It depends on FMNH2 as a cofactor.

It carries out the reaction 5-O-(1-carboxyvinyl)-3-phosphoshikimate = chorismate + phosphate. It functions in the pathway metabolic intermediate biosynthesis; chorismate biosynthesis; chorismate from D-erythrose 4-phosphate and phosphoenolpyruvate: step 7/7. In terms of biological role, catalyzes the anti-1,4-elimination of the C-3 phosphate and the C-6 proR hydrogen from 5-enolpyruvylshikimate-3-phosphate (EPSP) to yield chorismate, which is the branch point compound that serves as the starting substrate for the three terminal pathways of aromatic amino acid biosynthesis. This reaction introduces a second double bond into the aromatic ring system. The protein is Chorismate synthase of Geotalea daltonii (strain DSM 22248 / JCM 15807 / FRC-32) (Geobacter daltonii).